The chain runs to 354 residues: Rhodopsin (354 aa).

Topologically, residues 1–36 are extracellular; sequence MNGTEGPYFYVPMVNTTGIVRSPYEYPQYYLVSPAA. Asn-2 and Asn-15 each carry an N-linked (GlcNAc...) asparagine glycan. A helical transmembrane segment spans residues 37–61; it reads YACLGAYMFFLILVGFPVNFLTLYV. Over 62-73 the chain is Cytoplasmic; that stretch reads TIEHKKLRTPLN. The chain crosses the membrane as a helical span at residues 74–96; it reads YILLNLAVADLFMVFGGFTTTIY. At 97–110 the chain is on the extracellular side; sequence TSMHGYFVLGRLGC. Cys-110 and Cys-187 are oxidised to a cystine. A helical membrane pass occupies residues 111 to 133; that stretch reads NLEGYFATLGGEIGLWSLVVLAV. Residues 134–136 carry the 'Ionic lock' involved in activated form stabilization motif; that stretch reads ERW. The Cytoplasmic portion of the chain corresponds to 134–152; sequence ERWLVVCKPISNFRFTENH. Residues 153–173 traverse the membrane as a helical segment; sequence AIMGLVFTWIMANACAAPPLL. The Extracellular segment spans residues 174 to 202; that stretch reads GWSRYIPEGMQCSCGVDYYTRAEGFNNES. The chain crosses the membrane as a helical span at residues 203 to 224; it reads FVIYMFICHFCIPLVVVFFCYG. At 225 to 252 the chain is on the cytoplasmic side; that stretch reads RLLCAVKEAAAAQQESETTQRAEREVTR. A helical membrane pass occupies residues 253–274; the sequence is MVVILVIGFLVCWTPYASVAWY. Residues 275 to 286 are Extracellular-facing; it reads IFSNQGSEFGPL. The chain crosses the membrane as a helical span at residues 287–308; sequence FMTIPAFFAKSSSIYNPMIYIC. Lys-296 carries the post-translational modification N6-(retinylidene)lysine. The Cytoplasmic segment spans residues 309 to 354; the sequence is MNKQFRHCMITTLCCGKNPFEEEEGASTTASKTEASSVSSSSVSPA. S-palmitoyl cysteine attachment occurs at residues Cys-322 and Cys-323. The tract at residues 333-354 is disordered; sequence GASTTASKTEASSVSSSSVSPA. Residues 334 to 354 are compositionally biased toward low complexity; that stretch reads ASTTASKTEASSVSSSSVSPA.

This sequence belongs to the G-protein coupled receptor 1 family. Opsin subfamily. In terms of processing, phosphorylated on some or all of the serine and threonine residues present in the C-terminal region. Post-translationally, contains one covalently linked retinal chromophore.

The protein resides in the membrane. Its subcellular location is the cell projection. It is found in the cilium. The protein localises to the photoreceptor outer segment. Its function is as follows. Photoreceptor required for image-forming vision at low light intensity. While most salt water fish species use retinal as chromophore, most freshwater fish use 3-dehydroretinal, or a mixture of retinal and 3-dehydroretinal. Light-induced isomerization of 11-cis to all-trans retinal triggers a conformational change that activates signaling via G-proteins. Subsequent receptor phosphorylation mediates displacement of the bound G-protein alpha subunit by arrestin and terminates signaling. The polypeptide is Rhodopsin (rho) (Gambusia affinis (Western mosquitofish)).